A 481-amino-acid polypeptide reads, in one-letter code: MTHQSDLIAEDIHAYLARHETKDLLRFITCGSVDDGKSTLIGRLLHDSRLIFEDQLAAIERDSQKHNTTDEAVDLALLVDGLQAEREQGITIDVAYRYFSTDTRKFIIADCPGHEQYTRNMATGASTADLAIILIDARYGVQTQTRRHSFIASLLGIRHVIVAVNKMDLLEFDQAVFERIRQDYLTFAKALDIHDIRFVPLSALRGDNVVSPSERMPWYDGPSLMQLLDSIRLDADQALQAFRLPVQYVNRPNLDFRGFCGTIAAGVIRPGDQVTVLPSGRQSRVRAIVTTDGELPVAATGQAVTLTLEDEIDISRGDMIVRHGEPLPLVADRLTVELVWMHDAPLQTGRAYWVKLAGKWLPGRVTAVHHRVNVNTMEREAASSLALNEIAEVTLEIDAPMAVDAYRQCRATGSLILVDRISNATLGAGMIRSAEPSAGIQSEKDAARRWQAFEIEFNELVRRHFPHWQARDMRDWPGHKE.

Residues 22–236 (KDLLRFITCG…LLDSIRLDAD (215 aa)) form the tr-type G domain. Positions 31-38 (GSVDDGKS) are G1. 31 to 38 (GSVDDGKS) contacts GTP. The segment at 89–93 (GITID) is G2. Positions 110–113 (DCPG) are G3. GTP contacts are provided by residues 110–114 (DCPGH) and 165–168 (NKMD). A G4 region spans residues 165 to 168 (NKMD). The interval 202-204 (SAL) is G5.

Belongs to the TRAFAC class translation factor GTPase superfamily. Classic translation factor GTPase family. CysN/NodQ subfamily. Heterodimer composed of CysD, the smaller subunit, and CysN.

It carries out the reaction sulfate + ATP + H(+) = adenosine 5'-phosphosulfate + diphosphate. It participates in sulfur metabolism; hydrogen sulfide biosynthesis; sulfite from sulfate: step 1/3. Functionally, with CysD forms the ATP sulfurylase (ATPS) that catalyzes the adenylation of sulfate producing adenosine 5'-phosphosulfate (APS) and diphosphate, the first enzymatic step in sulfur assimilation pathway. APS synthesis involves the formation of a high-energy phosphoric-sulfuric acid anhydride bond driven by GTP hydrolysis by CysN coupled to ATP hydrolysis by CysD. The chain is Sulfate adenylyltransferase subunit 1 from Laribacter hongkongensis (strain HLHK9).